The sequence spans 316 residues: Pantothenate kinase (316 aa).

95–102 is an ATP binding site; that stretch reads GSVAVGKS.

Belongs to the prokaryotic pantothenate kinase family.

It localises to the cytoplasm. It carries out the reaction (R)-pantothenate + ATP = (R)-4'-phosphopantothenate + ADP + H(+). The protein operates within cofactor biosynthesis; coenzyme A biosynthesis; CoA from (R)-pantothenate: step 1/5. The sequence is that of Pantothenate kinase from Sodalis glossinidius (strain morsitans).